The chain runs to 539 residues: Phosphoenolpyruvate carboxykinase (ATP) (539 aa).

The substrate site is built by Arg-64, Tyr-206, and Lys-212. ATP-binding positions include Lys-212, His-231, and 247–255 (GLSGTGKTT). Lys-212 and His-231 together coordinate Mn(2+). Asp-268 serves as a coordination point for Mn(2+). Residues Glu-296, Arg-332, 448 to 449 (RI), and Thr-454 each bind ATP. Residue Arg-332 participates in substrate binding.

Belongs to the phosphoenolpyruvate carboxykinase (ATP) family. As to quaternary structure, monomer. Mn(2+) is required as a cofactor.

The protein resides in the cytoplasm. It catalyses the reaction oxaloacetate + ATP = phosphoenolpyruvate + ADP + CO2. The protein operates within carbohydrate biosynthesis; gluconeogenesis. Functionally, involved in the gluconeogenesis. Catalyzes the conversion of oxaloacetate (OAA) to phosphoenolpyruvate (PEP) through direct phosphoryl transfer between the nucleoside triphosphate and OAA. The sequence is that of Phosphoenolpyruvate carboxykinase (ATP) from Pectobacterium atrosepticum (strain SCRI 1043 / ATCC BAA-672) (Erwinia carotovora subsp. atroseptica).